We begin with the raw amino-acid sequence, 155 residues long: Histone H3-like centromeric protein hH3v (155 aa).

A compositionally biased stretch (low complexity) spans 1-24 (MPPKKGGVTKSKAVSKKAAAVPTP). The disordered stretch occupies residues 1-56 (MPPKKGGVTKSKAVSKKAAAVPTPKATPPGRRKSRASSVQPGDPVPQGKKRRYRPG). The interval 45–148 (VPQGKKRRYR…IQLARRIRGV (104 aa)) is H3-like.

It belongs to the histone H3 family. Component of centromeric nucleosomes, where DNA is wrapped around a histone octamer core. The octamer contains two molecules each of H2A, H2B, hH3v/CENPA and H4 assembled in one hH3v-H4 heterotetramer and two H2A-H2B heterodimers. Interacts with the inner kinetochore. Post-translationally, ubiquitinated. Is degraded through ubiquitin-mediated proteolysis when not protected by its association to the kinetochore.

The protein resides in the nucleus. The protein localises to the chromosome. It is found in the centromere. Functionally, histone H3-like nucleosomal protein that is specifically found in centromeric nucleosomes. Replaces conventional H3 in the nucleosome core of centromeric chromatin that serves as an assembly site for the inner kinetochore. Required for recruitment and assembly of kinetochore proteins, mitotic progression and chromosome segregation. May serve as an epigenetic mark that propagates centromere identity through replication and cell division. This chain is Histone H3-like centromeric protein hH3v (hH3v), found in Neurospora crassa (strain ATCC 24698 / 74-OR23-1A / CBS 708.71 / DSM 1257 / FGSC 987).